We begin with the raw amino-acid sequence, 465 residues long: Gamma-aminobutyric acid receptor subunit gamma-1 (465 aa).

The first 20 residues, Met1–Gly20, serve as a signal peptide directing secretion. At Val21–Phe273 the chain is on the extracellular side. N-linked (GlcNAc...) asparagine glycosylation is found at Asn50 and Asn127. Cys188 and Cys202 are disulfide-bonded. Asn245 carries N-linked (GlcNAc...) asparagine glycosylation. The helical transmembrane segment at Thr274–Ile294 threads the bilayer. Over Asn295–Pro300 the chain is Cytoplasmic. A helical transmembrane segment spans residues Ala301 to Ala320. Over Arg321–Ser328 the chain is Extracellular. A helical transmembrane segment spans residues Tyr329–Met349. At Glu350–Arg444 the chain is on the cytoplasmic side. Residues Ile445–Leu465 form a helical membrane-spanning segment.

It belongs to the ligand-gated ion channel (TC 1.A.9) family. Gamma-aminobutyric acid receptor (TC 1.A.9.5) subfamily. GABRG1 sub-subfamily. In terms of assembly, heteropentamer, formed by a combination of alpha (GABRA1-6), beta (GABRB1-3), gamma (GABRG1-3), delta (GABRD), epsilon (GABRE), rho (GABRR1-3), pi (GABRP) and theta (GABRQ) chains, each subunit exhibiting distinct physiological and pharmacological properties. In terms of processing, may be palmitoylated. As to expression, expressed in brain.

The protein localises to the postsynaptic cell membrane. Its subcellular location is the cell membrane. It catalyses the reaction chloride(in) = chloride(out). Functionally, gamma subunit of the heteropentameric ligand-gated chloride channel gated by gamma-aminobutyric acid (GABA), a major inhibitory neurotransmitter in the brain. GABA-gated chloride channels, also named GABA(A) receptors (GABAAR), consist of five subunits arranged around a central pore and contain GABA active binding site(s) located at the alpha and beta subunit interface(s). When activated by GABA, GABAARs selectively allow the flow of chloride anions across the cell membrane down their electrochemical gradient. Chloride influx into the postsynaptic neuron following GABAAR opening decreases the neuron ability to generate a new action potential, thereby reducing nerve transmission. The protein is Gamma-aminobutyric acid receptor subunit gamma-1 of Rattus norvegicus (Rat).